The primary structure comprises 292 residues: Cytidine deaminase (292 aa).

CMP/dCMP-type deaminase domains lie at 47–167 and 186–292; these read TTLK…FGPK and DHQD…YYSL. 88-90 serves as a coordination point for substrate; the sequence is NQE. Zn(2+) is bound at residue histidine 101. The Proton donor role is filled by glutamate 103. Positions 128 and 131 each coordinate Zn(2+).

This sequence belongs to the cytidine and deoxycytidylate deaminase family. As to quaternary structure, homodimer. Requires Zn(2+) as cofactor.

It carries out the reaction cytidine + H2O + H(+) = uridine + NH4(+). It catalyses the reaction 2'-deoxycytidine + H2O + H(+) = 2'-deoxyuridine + NH4(+). This enzyme scavenges exogenous and endogenous cytidine and 2'-deoxycytidine for UMP synthesis. This Haemophilus influenzae (strain ATCC 51907 / DSM 11121 / KW20 / Rd) protein is Cytidine deaminase.